The sequence spans 93 residues: Alpha-defensin 22 (93 aa).

Positions 1-19 (MKKLVLLSALVLLAYQVQT) are cleaved as a signal peptide. Positions 20-58 (DPIQNTDEETNTEEQPGEEDQAVSVSFGGQEGSALHEKL) are excised as a propeptide. The segment at 22 to 41 (IQNTDEETNTEEQPGEEDQA) is disordered. Residues 25-40 (TDEETNTEEQPGEEDQ) show a composition bias toward acidic residues. Intrachain disulfides connect Cys-64/Cys-89, Cys-66/Cys-81, and Cys-71/Cys-88.

The protein belongs to the alpha-defensin family.

The protein resides in the secreted. Its function is as follows. May have microbicidal activities. The sequence is that of Alpha-defensin 22 (Defa22) from Mus musculus (Mouse).